Reading from the N-terminus, the 447-residue chain is tRNA(Ile)-lysidine synthase (447 aa).

An ATP-binding site is contributed by 31 to 36 (SGGMDS).

Belongs to the tRNA(Ile)-lysidine synthase family.

It is found in the cytoplasm. The catalysed reaction is cytidine(34) in tRNA(Ile2) + L-lysine + ATP = lysidine(34) in tRNA(Ile2) + AMP + diphosphate + H(+). Its function is as follows. Ligates lysine onto the cytidine present at position 34 of the AUA codon-specific tRNA(Ile) that contains the anticodon CAU, in an ATP-dependent manner. Cytidine is converted to lysidine, thus changing the amino acid specificity of the tRNA from methionine to isoleucine. This Pseudothermotoga lettingae (strain ATCC BAA-301 / DSM 14385 / NBRC 107922 / TMO) (Thermotoga lettingae) protein is tRNA(Ile)-lysidine synthase.